The primary structure comprises 302 residues: Endochitinase 2 (302 aa).

The 42-residue stretch at 1 to 42 (EQCGRQAGGALCPGGLCCSQFGWCGSTADYCTVPGCQSQCSG) folds into the Chitin-binding type-1 domain. Disulfide bonds link Cys-3/Cys-18, Cys-12/Cys-24, Cys-17/Cys-31, Cys-36/Cys-40, Cys-73/Cys-136, Cys-148/Cys-156, and Cys-255/Cys-287. The Proton donor role is filled by Glu-117. The propeptide at 296-302 (GVSVDSM) is removed in mature form.

The protein belongs to the glycosyl hydrolase 19 family. Chitinase class I subfamily.

It catalyses the reaction Random endo-hydrolysis of N-acetyl-beta-D-glucosaminide (1-&gt;4)-beta-linkages in chitin and chitodextrins.. In terms of biological role, defense against chitin-containing fungal pathogens. The chain is Endochitinase 2 from Gossypium hirsutum (Upland cotton).